A 205-amino-acid chain; its full sequence is Regulatory protein RecX (205 aa).

This sequence belongs to the RecX family.

It localises to the cytoplasm. Modulates RecA activity. In Finegoldia magna (strain ATCC 29328 / DSM 20472 / WAL 2508) (Peptostreptococcus magnus), this protein is Regulatory protein RecX.